The following is a 142-amino-acid chain: ATP synthase epsilon chain (142 aa).

This sequence belongs to the ATPase epsilon chain family. As to quaternary structure, F-type ATPases have 2 components, CF(1) - the catalytic core - and CF(0) - the membrane proton channel. CF(1) has five subunits: alpha(3), beta(3), gamma(1), delta(1), epsilon(1). CF(0) has three main subunits: a, b and c.

It is found in the cell inner membrane. In terms of biological role, produces ATP from ADP in the presence of a proton gradient across the membrane. The chain is ATP synthase epsilon chain from Shewanella frigidimarina (strain NCIMB 400).